We begin with the raw amino-acid sequence, 126 residues long: MLTDPIADMLTRIRNAHLALHKEVSVPRSKMKEALAAILKEEGYITDFKMEESSIVIELKYFKGKPVISGLKRISKSGRRVYVGSTDIPRVQNGLGICILSTSSGVLEGTNARSKNVGGELLCEIW.

This sequence belongs to the universal ribosomal protein uS8 family. As to quaternary structure, part of the 30S ribosomal subunit. Contacts proteins S5 and S12.

One of the primary rRNA binding proteins, it binds directly to 16S rRNA central domain where it helps coordinate assembly of the platform of the 30S subunit. In Oleidesulfovibrio alaskensis (strain ATCC BAA-1058 / DSM 17464 / G20) (Desulfovibrio alaskensis), this protein is Small ribosomal subunit protein uS8.